The sequence spans 310 residues: Aspartate carbamoyltransferase catalytic subunit (310 aa).

Positions 54 and 55 each coordinate carbamoyl phosphate. Residue Lys-84 coordinates L-aspartate. Carbamoyl phosphate is bound by residues Arg-105, His-134, and Gln-137. Residues Arg-167 and Arg-229 each coordinate L-aspartate. Carbamoyl phosphate is bound by residues Leu-267 and Pro-268.

This sequence belongs to the aspartate/ornithine carbamoyltransferase superfamily. ATCase family. In terms of assembly, heterododecamer (2C3:3R2) of six catalytic PyrB chains organized as two trimers (C3), and six regulatory PyrI chains organized as three dimers (R2).

The enzyme catalyses carbamoyl phosphate + L-aspartate = N-carbamoyl-L-aspartate + phosphate + H(+). The protein operates within pyrimidine metabolism; UMP biosynthesis via de novo pathway; (S)-dihydroorotate from bicarbonate: step 2/3. Its function is as follows. Catalyzes the condensation of carbamoyl phosphate and aspartate to form carbamoyl aspartate and inorganic phosphate, the committed step in the de novo pyrimidine nucleotide biosynthesis pathway. This is Aspartate carbamoyltransferase catalytic subunit from Enterobacter sp. (strain 638).